The following is a 347-amino-acid chain: Quinolinate synthase (347 aa).

His-47 and Ser-68 together coordinate iminosuccinate. Residue Cys-113 coordinates [4Fe-4S] cluster. Residues 139–141 (YAN) and Ser-156 contribute to the iminosuccinate site. Cys-200 serves as a coordination point for [4Fe-4S] cluster. Residues 226–228 (HPE) and Thr-243 contribute to the iminosuccinate site. Residue Cys-297 coordinates [4Fe-4S] cluster.

This sequence belongs to the quinolinate synthase family. Type 1 subfamily. [4Fe-4S] cluster is required as a cofactor.

It localises to the cytoplasm. The catalysed reaction is iminosuccinate + dihydroxyacetone phosphate = quinolinate + phosphate + 2 H2O + H(+). It participates in cofactor biosynthesis; NAD(+) biosynthesis; quinolinate from iminoaspartate: step 1/1. Catalyzes the condensation of iminoaspartate with dihydroxyacetone phosphate to form quinolinate. This Salmonella typhi protein is Quinolinate synthase.